The primary structure comprises 1076 residues: MLRNGNEGMSTIPGFSQIQFEGFCRFINQALAEELDKFPTIKDPDHEIAFQLFAKGYQLLEPSIKERDAVYESLTYSSELYVSARLIFGFDVQKQTISIGNIPIMNSLGTFIINGIYRIVINQILLSPGIYYRSELDHKGISIYTGTIISDWGGRSELAIDKKERIWARVSRKQKISILVLSSAMGSNLREILDNVSYPEIFLSFPNAKEKKRIESKEKAILEFYQQFACVGGDLVFSESLCEELQKKFFQQKCELGRIGRRNMNRRLNLDIPQNNTFLLPRDVLAATDHLIGMKFGTGILDDDDMNHLKNKRIRSVADLLQDQFGLALGRLQHAVQKTIRRVFIRQSKPTPQTLVTPTSTSILLITTYETFFGTYPLSQVFDQTNPLTQTVHGRKVSCLGPGGLTGRTASFRSRDIHPSHYGRICPIDTSEGINVGLTGSLAIHARIDHLWGSIESPFYEISAEKAKEKKERQVVYLSPNRDEYYMIAAGNSLSLNQGIQEEQVVPARYRQEFLTIAWEQIHVRSIFPFQYFSIGGSLIPFIEHNDANRALMSSNMQRQAVPLSRSEKCIVGTGLERQTALDSRVSIIAEREGKIISTDSHKILLSSSGKTISIPLVNHRRSNKNTCMHQKPRVPRGKSIKKGQILAEGAATVGGELALGKNVLVAYMPWEGYNFEDAVLISERLVYEDIYTSFHIRKYEIQTDTTSQGSAEKITKEIPHLEEHLLRNLDRNGVVRLGSWVETGDILVGKLTPQIASESSYIAEAGLLRAIFGLEVSTSKETSLKLPIGGRGRVIDVKWIQRDPLDIMVRVYILQKREIKVGDKVAGRHGNKGIISKILPRQDMPYLQDGTPVDMVFNPLGVPSRMNVGQIFESSLGLAGDLLKKHYRIAPFDERYEQEASRKLVFSELYEASKETKNPWVFEPEYPGKSRIFDGRTGDPFEQPVLIGKSYILKLIHQVDEKIHGRSTGPYSLVTQQPVRGRAKQGGQRVGEMEVWALEGFGVAHILQEILTYKSDHLIARQEILNATIWGKRIPNHEDPPESFRVLVRELRSLALELNHFLVSEKNFQVNREEV.

It belongs to the RNA polymerase beta chain family. As to quaternary structure, in plastids the minimal PEP RNA polymerase catalytic core is composed of four subunits: alpha, beta, beta', and beta''. When a (nuclear-encoded) sigma factor is associated with the core the holoenzyme is formed, which can initiate transcription.

The protein resides in the plastid. The protein localises to the chloroplast. The enzyme catalyses RNA(n) + a ribonucleoside 5'-triphosphate = RNA(n+1) + diphosphate. Its function is as follows. DNA-dependent RNA polymerase catalyzes the transcription of DNA into RNA using the four ribonucleoside triphosphates as substrates. This chain is DNA-directed RNA polymerase subunit beta, found in Triticum aestivum (Wheat).